A 374-amino-acid polypeptide reads, in one-letter code: Chaperone protein DnaJ (374 aa).

A J domain is found at 5–70 (CYYEILNVSK…SKRSRYDQFG (66 aa)). The segment at 130–207 (GVEKEITIPR…CYGNGKVKKQ (78 aa)) adopts a CR-type zinc-finger fold. 8 residues coordinate Zn(2+): Cys-143, Cys-146, Cys-159, Cys-162, Cys-181, Cys-184, Cys-195, and Cys-198. 4 CXXCXGXG motif repeats span residues 143–150 (CDSCDGTG), 159–166 (CHACHGQG), 181–188 (CPVCNGTG), and 195–202 (CDACYGNG).

Belongs to the DnaJ family. Homodimer. It depends on Zn(2+) as a cofactor.

The protein localises to the cytoplasm. Its function is as follows. Participates actively in the response to hyperosmotic and heat shock by preventing the aggregation of stress-denatured proteins and by disaggregating proteins, also in an autonomous, DnaK-independent fashion. Unfolded proteins bind initially to DnaJ; upon interaction with the DnaJ-bound protein, DnaK hydrolyzes its bound ATP, resulting in the formation of a stable complex. GrpE releases ADP from DnaK; ATP binding to DnaK triggers the release of the substrate protein, thus completing the reaction cycle. Several rounds of ATP-dependent interactions between DnaJ, DnaK and GrpE are required for fully efficient folding. Also involved, together with DnaK and GrpE, in the DNA replication of plasmids through activation of initiation proteins. In Francisella tularensis subsp. tularensis (strain FSC 198), this protein is Chaperone protein DnaJ.